Here is a 210-residue protein sequence, read N- to C-terminus: Probable GTP-binding protein EngB (210 aa).

The EngB-type G domain maps to 29–203 (NGIEIAFAGR…SNKLDSWFAP (175 aa)). GTP-binding positions include 37-44 (GRSNAGKS), 64-68 (GRTQL), 82-85 (DLPG), 149-152 (TKAD), and 181-184 (IYSA). Residues Ser44 and Thr66 each contribute to the Mg(2+) site.

Belongs to the TRAFAC class TrmE-Era-EngA-EngB-Septin-like GTPase superfamily. EngB GTPase family. Mg(2+) is required as a cofactor.

In terms of biological role, necessary for normal cell division and for the maintenance of normal septation. This Haemophilus ducreyi (strain 35000HP / ATCC 700724) protein is Probable GTP-binding protein EngB.